Reading from the N-terminus, the 261-residue chain is Snake venom serine protease (261 aa).

Residues 1 to 20 (MALIGVLANLLILCLSYART) form the signal peptide. A propeptide spanning residues 21–24 (APDR) is cleaved from the precursor. Residues 25-249 (IIGGLECNQN…YIDWIQDIMA (225 aa)) form the Peptidase S1 domain. Disulfide bonds link C31/C163, C50/C66, C98/C256, C142/C210, C174/C189, and C200/C225. The Charge relay system role is filled by H65. N103 carries an N-linked (GlcNAc...) asparagine glycan. D110 (charge relay system) is an active-site residue. N117 and N121 each carry an N-linked (GlcNAc...) asparagine glycan. Catalysis depends on S204, which acts as the Charge relay system.

It belongs to the peptidase S1 family. Snake venom subfamily. In terms of assembly, monomer. In terms of tissue distribution, expressed by the venom gland.

It localises to the secreted. In terms of biological role, snake venom serine protease that may act in the hemostasis system of the prey. The polypeptide is Snake venom serine protease (Philodryas olfersii (Green snake)).